The sequence spans 153 residues: Hemoglobin-3 (153 aa).

The residue at position 2 (Ser-2) is an N-acetylserine. The Globin domain maps to 4-150 (GLTGPQKAAL…ICRVQGDFMK (147 aa)). His-99 serves as a coordination point for heme b.

This sequence belongs to the globin family. Homotetramer.

Its subcellular location is the cytoplasm. The protein is Hemoglobin-3 of Phacoides pectinatus (Thick lucine).